The following is a 30-amino-acid chain: Neurotoxin II.22.5 (30 aa).

One can recognise an LCN-type CS-alpha/beta domain in the interval 1 to 30 (KEGYIVNYHTGCKYTCAKLGDNDYCLRECK).

This sequence belongs to the long (4 C-C) scorpion toxin superfamily. Sodium channel inhibitor family. Beta subfamily. Expressed by the venom gland.

It is found in the secreted. In terms of biological role, binds to sodium channels (Nav) and inhibits the inactivation of the activated channels, thereby blocking neuronal transmission. This Centruroides tecomanus (Scorpion) protein is Neurotoxin II.22.5.